A 577-amino-acid polypeptide reads, in one-letter code: Putative laccase-1 (577 aa).

The first 28 residues, 1–28 (MGTAKIPALLWFLLAGLVLALAVNPAHG), serve as a signal peptide directing secretion. Plastocyanin-like domains are found at residues 37-153 (FITE…PKRG) and 163-316 (KEIP…YTDS). Residues asparagine 42 and asparagine 83 are each glycosylated (N-linked (GlcNAc...) asparagine). Positions 87 and 89 each coordinate Cu cation. A glycan (N-linked (GlcNAc...) asparagine) is linked at asparagine 115. Histidine 132 and histidine 134 together coordinate Cu cation. Asparagine 276, asparagine 304, asparagine 382, and asparagine 402 each carry an N-linked (GlcNAc...) asparagine glycan. The 120-residue stretch at 442 to 561 (DINGGGPLLT…DTMFIVKDGK (120 aa)) folds into the Plastocyanin-like 3 domain. Cu cation is bound by residues histidine 478, histidine 481, histidine 483, histidine 540, cysteine 541, histidine 542, histidine 546, and methionine 551.

Belongs to the multicopper oxidase family. Cu cation serves as cofactor.

It is found in the secreted. The protein localises to the extracellular space. It localises to the apoplast. The catalysed reaction is 4 hydroquinone + O2 = 4 benzosemiquinone + 2 H2O. Functionally, lignin degradation and detoxification of lignin-derived products. The chain is Putative laccase-1 (LAC1) from Oryza sativa subsp. japonica (Rice).